Reading from the N-terminus, the 265-residue chain is Cyclin-C (265 aa).

The Cyclin N-terminal domain occupies 48–151; it reads IQVLGEQLKL…LLENLDCCLI (104 aa).

The protein belongs to the cyclin family. Cyclin C subfamily. As to quaternary structure, component of the Cdk8 module of the Mediator complex.

It localises to the nucleus. Component of the Mediator complex, a coactivator involved in regulated gene transcription of nearly all RNA polymerase II-dependent genes. Mediator functions as a bridge to convey information from gene-specific regulatory proteins to the basal RNA polymerase II transcription machinery. Mediator is recruited to promoters by direct interactions with regulatory proteins and serves as a scaffold for the assembly of a functional preinitiation complex with RNA polymerase II and the general transcription factors. Binds to and activates cyclin-dependent kinase Cdk8 that phosphorylates the CTD (C-terminal domain) of the large subunit of RNA polymerase II (RNAp II), which may inhibit the formation of a transcription initiation complex. In Aedes aegypti (Yellowfever mosquito), this protein is Cyclin-C (CycC).